The primary structure comprises 189 residues: 3-isopropylmalate dehydratase small subunit (189 aa).

The protein belongs to the LeuD family. LeuD type 1 subfamily. Heterodimer of LeuC and LeuD.

The catalysed reaction is (2R,3S)-3-isopropylmalate = (2S)-2-isopropylmalate. It participates in amino-acid biosynthesis; L-leucine biosynthesis; L-leucine from 3-methyl-2-oxobutanoate: step 2/4. Catalyzes the isomerization between 2-isopropylmalate and 3-isopropylmalate, via the formation of 2-isopropylmaleate. In Staphylococcus epidermidis (strain ATCC 35984 / DSM 28319 / BCRC 17069 / CCUG 31568 / BM 3577 / RP62A), this protein is 3-isopropylmalate dehydratase small subunit.